Here is a 758-residue protein sequence, read N- to C-terminus: 5-methyltetrahydropteroyltriglutamate--homocysteine methyltransferase (758 aa).

5-methyltetrahydropteroyltri-L-glutamate is bound by residues 17–20 (RELK) and Lys-117. Residues 434–436 (IGS) and Glu-487 each bind L-homocysteine. L-methionine contacts are provided by residues 434–436 (IGS) and Glu-487. 5-methyltetrahydropteroyltri-L-glutamate-binding positions include 518 to 519 (RC) and Trp-564. Asp-602 serves as a coordination point for L-homocysteine. Position 602 (Asp-602) interacts with L-methionine. Glu-608 provides a ligand contact to 5-methyltetrahydropteroyltri-L-glutamate. Residues His-644, Cys-646, and Glu-668 each contribute to the Zn(2+) site. His-697 functions as the Proton donor in the catalytic mechanism. Cys-729 serves as a coordination point for Zn(2+).

The protein belongs to the vitamin-B12 independent methionine synthase family. Zn(2+) serves as cofactor.

It carries out the reaction 5-methyltetrahydropteroyltri-L-glutamate + L-homocysteine = tetrahydropteroyltri-L-glutamate + L-methionine. The protein operates within amino-acid biosynthesis; L-methionine biosynthesis via de novo pathway; L-methionine from L-homocysteine (MetE route): step 1/1. Its function is as follows. Catalyzes the transfer of a methyl group from 5-methyltetrahydrofolate to homocysteine resulting in methionine formation. The chain is 5-methyltetrahydropteroyltriglutamate--homocysteine methyltransferase from Photorhabdus laumondii subsp. laumondii (strain DSM 15139 / CIP 105565 / TT01) (Photorhabdus luminescens subsp. laumondii).